A 349-amino-acid chain; its full sequence is tRNA pseudouridine synthase D (349 aa).

Phe27 serves as a coordination point for substrate. The active-site Nucleophile is the Asp80. A substrate-binding site is contributed by Asn129. In terms of domain architecture, TRUD spans 155 to 303; that stretch reads GVPNYFGAQR…VEAARRAMLL (149 aa). Phe329 is a substrate binding site.

This sequence belongs to the pseudouridine synthase TruD family.

It carries out the reaction uridine(13) in tRNA = pseudouridine(13) in tRNA. Responsible for synthesis of pseudouridine from uracil-13 in transfer RNAs. In Escherichia coli O6:H1 (strain CFT073 / ATCC 700928 / UPEC), this protein is tRNA pseudouridine synthase D.